A 431-amino-acid chain; its full sequence is Adenylosuccinate synthetase (431 aa).

Residues 21–27 (GDEGKGK) and 49–51 (GHT) each bind GTP. The Proton acceptor role is filled by Asp22. Mg(2+)-binding residues include Asp22 and Gly49. IMP is bound by residues 22–25 (DEGK), 47–50 (NAGH), Thr138, Arg152, Asn230, Thr245, and Arg309. His50 acts as the Proton donor in catalysis. 305–311 (ATTGRPR) provides a ligand contact to substrate. Residues Arg311, 337-339 (KLD), and 419-421 (GNG) contribute to the GTP site.

This sequence belongs to the adenylosuccinate synthetase family. In terms of assembly, homodimer. Mg(2+) is required as a cofactor.

The protein localises to the cytoplasm. It catalyses the reaction IMP + L-aspartate + GTP = N(6)-(1,2-dicarboxyethyl)-AMP + GDP + phosphate + 2 H(+). It participates in purine metabolism; AMP biosynthesis via de novo pathway; AMP from IMP: step 1/2. Its function is as follows. Plays an important role in the de novo pathway and in the salvage pathway of purine nucleotide biosynthesis. Catalyzes the first committed step in the biosynthesis of AMP from IMP. This Paramecium tetraurelia protein is Adenylosuccinate synthetase.